The primary structure comprises 66 residues: Large ribosomal subunit protein bL33c (66 aa).

This sequence belongs to the bacterial ribosomal protein bL33 family.

The protein resides in the plastid. Its subcellular location is the chloroplast. In Illicium oligandrum (Star anise), this protein is Large ribosomal subunit protein bL33c.